Here is a 369-residue protein sequence, read N- to C-terminus: Forkhead box protein I2-A (369 aa).

Positions 124–218 (RPPYSYSSLI…DNGNFRRKRK (95 aa)) form a DNA-binding region, fork-head. A disordered region spans residues 215-252 (RKRKRKSESVGAGFDEDSNEDKKPLALKSLGSDSPQGA).

As to expression, localized to the animal hemisphere of early cleavage stage embryos. Zygotic expression is restricted to the dorsal part of the epibranchial placodes of the head within a region located near the tip of the first, second and third visceral pouch.

It is found in the nucleus. Its function is as follows. Possible transcriptional activator. The chain is Forkhead box protein I2-A (foxi2-a) from Xenopus laevis (African clawed frog).